We begin with the raw amino-acid sequence, 821 residues long: KN motif and ankyrin repeat domain-containing protein 3 (821 aa).

The span at 1–10 (MAKFALNQNL) shows a compositional bias: polar residues. Disordered stretches follow at residues 1–36 (MAKFALNQNLPDLGGPRLCPVPAAGGARSPSSPYSV), 58–184 (GPAA…AQLQ), 224–333 (LLAG…APET), and 385–547 (AAEE…GRCE). Low complexity predominate over residues 77–88 (RPGLAGARSPGA). The segment covering 128–150 (PRVEHTLRETSRRLELAQTHERA) has biased composition (basic and acidic residues). The segment covering 151–181 (PSPGRGVPRSPRGSGRSSPAPNLAPASPGPA) has biased composition (low complexity). Residues Ser152, Ser160, Ser164, Ser167, Ser168, and Ser177 each carry the phosphoserine modification. Residues 181–230 (AQLQLVREQMAAALRRLRELEDQARTLPELQEQVRALRAEKARLLAGRAQ) adopt a coiled-coil conformation. A compositionally biased stretch (basic and acidic residues) spans 237–261 (AETRPDKLAQLRRLTERLATSERGG). Ser271, Ser280, and Ser293 each carry phosphoserine. Residues 367–404 (GVSELLRGRLRELEEAREAAEEAAAGARAQLREATTQT) are a coiled coil. Low complexity-rich tracts occupy residues 388–400 (EAAAGARAQLREA) and 494–507 (NGGAEPPGSSSGSG). ANK repeat units follow at residues 622 to 652 (NGNTALHYSVSHGNLAIASLLLDTGACEVNR), 656 to 690 (AGYSALMLAALTSVRQEEEDMAVVQRLFCMGDVNA), 695 to 724 (TGQTALMLAISHGRQDMVATLLACGADVNA), 728 to 758 (DGATALMCASEYGRLDTVRLLLTQPGCDPAI), and 762 to 785 (EGTSALAIALEAEQDEVAALLHAH). The segment at 784 to 821 (AHLSSGQPDTQSESPPGSQTATPGEGECGDNGENPQVQ) is disordered. Residues 787–805 (SSGQPDTQSESPPGSQTAT) are compositionally biased toward polar residues.

In terms of tissue distribution, strongly expressed in breast, liver, lung, skeletal muscle and kidney.

Its function is as follows. May be involved in the control of cytoskeleton formation by regulating actin polymerization. The protein is KN motif and ankyrin repeat domain-containing protein 3 of Homo sapiens (Human).